The following is a 261-amino-acid chain: UPF0328 protein ECU06_0100 (261 aa).

The protein belongs to the UPF0328 family.

The chain is UPF0328 protein ECU06_0100 from Encephalitozoon cuniculi (strain GB-M1) (Microsporidian parasite).